Here is a 28-residue protein sequence, read N- to C-terminus: Morintide mO6 (28 aa).

The Chitin-binding type-1 domain occupies 1 to 28; sequence NGLCCSQYGFCGTTSAYCSRANGCQSNC. 2 disulfide bridges follow: Cys4–Cys18 and Cys24–Cys28.

As to expression, seeds (at protein level).

In terms of biological role, chitin-binding protein which functions in defense against chitin-containing fungal pathogens. The sequence is that of Morintide mO6 from Moringa oleifera (Horseradish tree).